The sequence spans 326 residues: Porphobilinogen deaminase (326 aa).

The residue at position 251 (cysteine 251) is an S-(dipyrrolylmethanemethyl)cysteine.

Belongs to the HMBS family. The cofactor is dipyrromethane.

It carries out the reaction 4 porphobilinogen + H2O = hydroxymethylbilane + 4 NH4(+). It functions in the pathway porphyrin-containing compound metabolism; protoporphyrin-IX biosynthesis; coproporphyrinogen-III from 5-aminolevulinate: step 2/4. In terms of biological role, tetrapolymerization of the monopyrrole PBG into the hydroxymethylbilane pre-uroporphyrinogen in several discrete steps. This is Porphobilinogen deaminase (HEM3) from Eremothecium gossypii (strain ATCC 10895 / CBS 109.51 / FGSC 9923 / NRRL Y-1056) (Yeast).